A 297-amino-acid chain; its full sequence is MTVPASTAPQVPPQQDPQVPHPQEPREEPHEEPPSPPAAPRPQSRGADTRALTQVLFGQLKGLQPGTREHERVRGALIEANLPLVRYAAARFRSRNEPMEDVVQVGTIGLINAIDRFDPERGVQFPTFAMPTVVGEIKRYFRDNVRTVHVPRRLHELWVQVNAATEDLTTLHGRTPTTPEIAERLRISEDEVLSCIEAGRSYHATSLEAAQEGDGMPGLLDRLGYEDPELAGVEHRDLVRHLLVQLPEREQRILLLRYYNNLTQSQISAELGVSQMHVSRLLARSFARLRSANRIEA.

Residues 1–46 are disordered; the sequence is MTVPASTAPQVPPQQDPQVPHPQEPREEPHEEPPSPPAAPRPQSRG. Positions 10–22 are enriched in pro residues; that stretch reads QVPPQQDPQVPHP. The span at 23 to 33 shows a compositional bias: basic and acidic residues; sequence QEPREEPHEEP. A Polymerase core binding motif is present at residues 101 to 114; it reads DVVQVGTIGLINAI. The H-T-H motif DNA-binding region spans 264 to 283; that stretch reads QSQISAELGVSQMHVSRLLA.

Belongs to the sigma-70 factor family. SigB subfamily.

Sigma factors are initiation factors that promote the attachment of RNA polymerase to specific initiation sites and are then released. This sigma factor is required for normal spore maturation. This Kitasatospora aureofaciens (Streptomyces aureofaciens) protein is RNA polymerase sigma-F factor (sigF).